Reading from the N-terminus, the 1055-residue chain is SMC5-SMC6 complex localization factor protein 1 (1055 aa).

2 consecutive BRCT domains span residues 2–80 (EDDA…AQSG) and 121–199 (PGAF…LLEK). The tract at residues 312–332 (KKRKKEKERDSRKDIEHDRST) is disordered. Basic and acidic residues predominate over residues 318 to 332 (KERDSRKDIEHDRST). An NSE5-like domain; mediates interaction with SLF2 region spans residues 407–1055 (PRGILNLIES…VMCRSVTEIS (649 aa)). ANK repeat units lie at residues 804-834 (KGET…DINV), 838-867 (AGWT…EVDL), and 872-901 (DGVT…PVLL). Lysine 929 is covalently cross-linked (Glycyl lysine isopeptide (Lys-Gly) (interchain with G-Cter in SUMO2)).

As to quaternary structure, interacts (via N-terminus) with SLF2; this interaction links RAD18 to the SMC5-SMC6 complex. Interacts (via BRCT domains) with RAD18; this interaction occurs in a SLF2-independent manner. Interacts with SMC6. Interacts (via BRCT domains) with RAD18 (via C-terminus and phosphorylated form); this interaction is required for efficient repair of UV-induced DNA damage.

It localises to the nucleus. Its subcellular location is the cytoplasm. The protein resides in the cytoskeleton. It is found in the microtubule organizing center. The protein localises to the centrosome. Plays a role in the DNA damage response (DDR) pathway by regulating postreplication repair of UV-damaged DNA and genomic stability maintenance. The SLF1-SLF2 complex acts to link RAD18 with the SMC5-SMC6 complex at replication-coupled interstrand cross-links (ICL) and DNA double-strand breaks (DSBs) sites on chromatin during DNA repair in response to stalled replication forks. Promotes the recruitment of SLF2 and the SMC5-SMC6 complex to DNA lesions. This chain is SMC5-SMC6 complex localization factor protein 1, found in Bos taurus (Bovine).